The primary structure comprises 368 residues: Cobalt-precorrin-5B C(1)-methyltransferase (368 aa).

This sequence belongs to the CbiD family.

The enzyme catalyses Co-precorrin-5B + S-adenosyl-L-methionine = Co-precorrin-6A + S-adenosyl-L-homocysteine. It functions in the pathway cofactor biosynthesis; adenosylcobalamin biosynthesis; cob(II)yrinate a,c-diamide from sirohydrochlorin (anaerobic route): step 6/10. Its function is as follows. Catalyzes the methylation of C-1 in cobalt-precorrin-5B to form cobalt-precorrin-6A. The polypeptide is Cobalt-precorrin-5B C(1)-methyltransferase (Brucella anthropi (strain ATCC 49188 / DSM 6882 / CCUG 24695 / JCM 21032 / LMG 3331 / NBRC 15819 / NCTC 12168 / Alc 37) (Ochrobactrum anthropi)).